The following is a 385-amino-acid chain: MPEVIPPDSVGIVTPQVAQFDIPLTLECGKQLNSFQLMYETYGELNADRSNAVLICHALSGHHHAAGYHSMEDSKPGWWDSCIGPGKPIDTNKFFVVSLNNLGGCAGSTGPASINPETGKAYGPDFPVVTVQDWVRSQAMLADRLNIPHWAAVIGGSLGGMQALQWSIEYPERVHNAAVIASTPRLSAQNIAFNEVARKAITSDPNFYEGRYGEHTTYPDKGLMLARMVGHITYLSNASMGEKFGRDLRAQTLKFGLLDVQFEVESYLHYQGERFSKNFDANTYLLMTRALDYFDPARAHEGDLSKALEPAKCKYLVVSFTTDWRFPPDRSEELVNAMVEAKKSVSYAEVDSPHGHDAFLIPTQRYMDVFHGFMGRVAKEIPHAR.

The 310-residue stretch at 51 to 360 (NAVLICHALS…DSPHGHDAFL (310 aa)) folds into the AB hydrolase-1 domain. Serine 157 serves as the catalytic Nucleophile. Residue arginine 227 participates in substrate binding. Residues aspartate 323 and histidine 356 contribute to the active site. Substrate is bound at residue aspartate 357.

This sequence belongs to the AB hydrolase superfamily. MetX family. In terms of assembly, homodimer.

Its subcellular location is the cytoplasm. The catalysed reaction is L-homoserine + succinyl-CoA = O-succinyl-L-homoserine + CoA. Its pathway is amino-acid biosynthesis; L-methionine biosynthesis via de novo pathway; O-succinyl-L-homoserine from L-homoserine: step 1/1. Its function is as follows. Transfers a succinyl group from succinyl-CoA to L-homoserine, forming succinyl-L-homoserine. The polypeptide is Homoserine O-succinyltransferase (Hahella chejuensis (strain KCTC 2396)).